Reading from the N-terminus, the 493-residue chain is Non-cyanogenic beta-glucosidase (493 aa).

An N-terminal signal peptide occupies residues 1–18; sequence MDFIVAIFALFVISSFTI. Residue asparagine 34 is glycosylated (N-linked (GlcNAc...) asparagine). Residues glutamine 54, histidine 158, and 203-204 each bind a beta-D-glucoside; that span reads NE. Residue glutamate 204 is the Proton donor of the active site. A glycan (N-linked (GlcNAc...) asparagine) is linked at asparagine 335. Position 346 (tyrosine 346) interacts with a beta-D-glucoside. 2 N-linked (GlcNAc...) asparagine glycosylation sites follow: asparagine 371 and asparagine 412. Residues glutamate 422, tryptophan 471, 478-479, and phenylalanine 487 contribute to the a beta-D-glucoside site; that span reads EW. Glutamate 422 serves as the catalytic Nucleophile.

The protein belongs to the glycosyl hydrolase 1 family. Leaves.

The enzyme catalyses Hydrolysis of terminal, non-reducing beta-D-glucosyl residues with release of beta-D-glucose.. This is Non-cyanogenic beta-glucosidase from Trifolium repens (Creeping white clover).